A 33-amino-acid chain; its full sequence is Non-specific lipid-transfer protein (33 aa).

Residues Cys-14 and Cys-29 are joined by a disulfide bond.

It belongs to the plant LTP family. As to quaternary structure, dimer.

In terms of biological role, plant non-specific lipid-transfer proteins transfer phospholipids as well as galactolipids across membranes. May play a role in wax or cutin deposition in the cell walls of expanding epidermal cells and certain secretory tissues. Has antibacterial activity against Gram-positive bacteria S.aureus and S.epidermidis and blocks biofilm formation. In a mouse model, also protects against bacterial sepsis and has an anti-inflammatory effect. Exhibits antinociceptive activity upon oral or intraperitoneal application in mice. In Morinda citrifolia (Indian mulberry), this protein is Non-specific lipid-transfer protein.